A 151-amino-acid chain; its full sequence is Large-conductance mechanosensitive channel (151 aa).

Helical transmembrane passes span 12 to 32 (GNIVDLAVAVVIGTAFTALVT) and 71 to 91 (VLLSAAINFFLIAFAVYFLVV). The tract at residues 122–151 (AQTNGDSPGRHGGRGTPSPTDGPLASTESQ) is disordered.

Belongs to the MscL family. In terms of assembly, homopentamer.

Its subcellular location is the cell membrane. Channel that opens in response to stretch forces in the membrane lipid bilayer. May participate in the regulation of osmotic pressure changes within the cell. This is Large-conductance mechanosensitive channel from Mycobacterium bovis (strain BCG / Pasteur 1173P2).